We begin with the raw amino-acid sequence, 562 residues long: Non-homologous end joining factor IFFO1 (562 aa).

Residues Ala65–Arg116 form an LMNA binding region. Positions Asn73–Lys529 constitute an IF rod domain. The stretch at Arg85–Arg117 forms a coiled coil. Positions Arg154–Ser187 are disordered. Residues Ala168–Ser187 are compositionally biased toward low complexity. Positions Glu237–Leu301 form a coiled coil. Residues Met364–Ser401 form a disordered region. Positions Glu453–Arg528 are XCCR4 binding. Required for localization to the double-strand breaks (DSBs). Residues Leu458–Met504 are a coiled coil. Residues Thr523 to Arg562 are disordered. Basic and acidic residues predominate over residues Arg553 to Arg562.

The protein belongs to the intermediate filament family. As to quaternary structure, forms a heterotetramer with XRCC4. The interaction with XRCC4 is direct, involves LIG4-free XRCC4 and leads to relocalization of IFFO1 at the double-strand break (DSB) sites. Interacts with LMNA; the interaction forms an interior nucleoskeleton and the recruitment to DNA double-strand breaks.

The protein localises to the nucleus. It is found in the nucleoplasm. Its subcellular location is the nucleus inner membrane. It localises to the nucleus matrix. Its function is as follows. Nuclear matrix protein involved in the immobilization of broken DNA ends and the suppression of chromosome translocation during DNA double-strand breaks (DSBs). Interacts with the nuclear lamina component LMNA, resulting in the formation of a nucleoskeleton that will relocalize to the DSB sites in a XRCC4-dependent manner and promote the immobilization of the broken ends, thereby preventing chromosome translocation. Acts as a scaffold that allows the DNA repair protein XRCC4 and LMNA to assemble into a complex at the DSB sites. This is Non-homologous end joining factor IFFO1 from Mus musculus (Mouse).